We begin with the raw amino-acid sequence, 407 residues long: tRNA (uracil(54)-C(5))-methyltransferase (407 aa).

The [4Fe-4S] cluster site is built by Cys-61, Cys-67, Cys-70, and Cys-137. S-adenosyl-L-methionine is bound by residues Gln-253, Tyr-279, Thr-284, 300–301 (DS), Asp-327, and Asp-341. The Nucleophile role is filled by Cys-368. Glu-400 acts as the Proton acceptor in catalysis.

It belongs to the class I-like SAM-binding methyltransferase superfamily. RNA M5U methyltransferase family.

It catalyses the reaction uridine(54) in tRNA + S-adenosyl-L-methionine = 5-methyluridine(54) in tRNA + S-adenosyl-L-homocysteine + H(+). Its function is as follows. Catalyzes the formation of 5-methyl-uridine at position 54 (m5U54) in tRNA. The chain is tRNA (uracil(54)-C(5))-methyltransferase from Pyrococcus horikoshii (strain ATCC 700860 / DSM 12428 / JCM 9974 / NBRC 100139 / OT-3).